A 273-amino-acid chain; its full sequence is Formamidopyrimidine-DNA glycosylase (273 aa).

P2 acts as the Schiff-base intermediate with DNA in catalysis. Catalysis depends on E3, which acts as the Proton donor. The active-site Proton donor; for beta-elimination activity is K58. Positions 91 and 110 each coordinate DNA. Residues 238-272 form an FPG-type zinc finger; that stretch reads QVYGKTGQPCPRCASMIVKIKLGGRGTHLCPHCQK. Catalysis depends on R262, which acts as the Proton donor; for delta-elimination activity.

Belongs to the FPG family. Monomer. Zn(2+) serves as cofactor.

It carries out the reaction Hydrolysis of DNA containing ring-opened 7-methylguanine residues, releasing 2,6-diamino-4-hydroxy-5-(N-methyl)formamidopyrimidine.. The catalysed reaction is 2'-deoxyribonucleotide-(2'-deoxyribose 5'-phosphate)-2'-deoxyribonucleotide-DNA = a 3'-end 2'-deoxyribonucleotide-(2,3-dehydro-2,3-deoxyribose 5'-phosphate)-DNA + a 5'-end 5'-phospho-2'-deoxyribonucleoside-DNA + H(+). Functionally, involved in base excision repair of DNA damaged by oxidation or by mutagenic agents. Acts as a DNA glycosylase that recognizes and removes damaged bases. Has a preference for oxidized purines, such as 7,8-dihydro-8-oxoguanine (8-oxoG). Has AP (apurinic/apyrimidinic) lyase activity and introduces nicks in the DNA strand. Cleaves the DNA backbone by beta-delta elimination to generate a single-strand break at the site of the removed base with both 3'- and 5'-phosphates. This Streptococcus thermophilus (strain ATCC BAA-250 / LMG 18311) protein is Formamidopyrimidine-DNA glycosylase.